Consider the following 1243-residue polypeptide: Interphotoreceptor matrix proteoglycan 2 (1243 aa).

The signal sequence occupies residues 1–27 (MIMFLPVGRMSLGILILFLTGGNLVSA). Residues 28–1106 (SEERQEPMHA…EFVSEPFVIG (1079 aa)) are Extracellular-facing. The segment at 205–234 (GLASESSAASPQESISNEIENVTEEPTQPA) is disordered. A compositionally biased stretch (low complexity) spans 207 to 220 (ASESSAASPQESIS). Residues 221-230 (NEIENVTEEP) show a composition bias toward polar residues. The N-linked (GlcNAc...) asparagine glycan is linked to Asn225. Residues 235–349 (AEQIAEFSIQ…KPTAVYTISN (115 aa)) enclose the SEA 1 domain. The interval 255–263 (RDPSSALYR) is hyaluronan-binding motif involved in chondroitin sulfate A-binding. Residues Asn297, Asn316, and Asn366 are each glycosylated (N-linked (GlcNAc...) asparagine). Residues Thr427, Thr428, and Thr429 are each glycosylated (O-linked (GalNAc...) threonine). N-linked (GlcNAc...) asparagine glycosylation occurs at Asn582. O-linked (GalNAc...) threonine glycans are attached at residues Thr701, Thr704, and Thr712. Residues 748–762 (EDMVHTESSSHKELD) show a composition bias toward basic and acidic residues. The interval 748-768 (EDMVHTESSSHKELDSEVPVS) is disordered. O-linked (GalNAc...) threonine glycosylation is found at Thr817 and Thr888. The SEA 2 domain occupies 900-1013 (GALVVFFSLR…YSLDVESGDE (114 aa)). Residues Asn945 and Asn959 are each glycosylated (N-linked (GlcNAc...) asparagine). EGF-like domains are found at residues 1013-1054 (EANP…LPCQ) and 1055-1096 (SLCD…QHCE). 6 disulfides stabilise this stretch: Cys1017/Cys1028, Cys1022/Cys1039, Cys1041/Cys1053, Cys1057/Cys1070, Cys1064/Cys1080, and Cys1082/Cys1095. Positions 1083–1091 (RVGSNWWYR) are hyaluronan-binding motif involved in chondroitin sulfate C-binding. A helical membrane pass occupies residues 1107–1127 (ITIASVVSFLLVASAVVFFLV). The hyaluronan-binding motif involved in chondroitin sulfate A- and C-binding stretch occupies residues 1128–1136 (KMLQAQNVR). Over 1128 to 1243 (KMLQAQNVRR…FVREHQMEEL (116 aa)) the chain is Cytoplasmic. The segment at 1139-1147 (RQRPTSSSR) is hyaluronan-binding motif involved in chondroitin sulfate C-binding. The tract at residues 1212 to 1220 (KEEIQERMR) is hyaluronan-binding motif involved in chondroitin sulfate A- and C-binding motif.

Expressed in the retina (at protein level). Expressed in the pineal gland.

It is found in the photoreceptor outer segment membrane. The protein resides in the photoreceptor inner segment membrane. The protein localises to the secreted. It localises to the extracellular space. Its subcellular location is the extracellular matrix. It is found in the interphotoreceptor matrix. Functionally, chondroitin sulfate- and hyaluronan-binding proteoglycan involved in the organization of interphotoreceptor matrix; may participate in the maturation and maintenance of the light-sensitive photoreceptor outer segment. Binds heparin. In Mus musculus (Mouse), this protein is Interphotoreceptor matrix proteoglycan 2 (Impg2).